Here is a 78-residue protein sequence, read N- to C-terminus: Cytochrome c oxidase subunit 6b-3 (78 aa).

The CHCH domain maps to 22-65 (TRHCFTRYIEFHRCTTAKGEDANECERFAKYYRALCPGEWVDKW). The short motif at 25–35 (CFTRYIEFHRC) is the Cx9C motif element. Cystine bridges form between Cys-25-Cys-57 and Cys-35-Cys-46. Positions 46-57 (CERFAKYYRALC) match the Cx10C motif motif.

Belongs to the cytochrome c oxidase subunit 6B (TC 3.D.4.8) family. In terms of tissue distribution, expressed in the whole plant.

The protein localises to the mitochondrion. This protein is one of the nuclear-coded polypeptide chains of cytochrome c oxidase, the terminal oxidase in mitochondrial electron transport. This protein may be one of the heme-binding subunits of the oxidase. The sequence is that of Cytochrome c oxidase subunit 6b-3 (COX6B-3) from Arabidopsis thaliana (Mouse-ear cress).